A 343-amino-acid polypeptide reads, in one-letter code: Small ribosomal subunit biogenesis GTPase RsgA (343 aa).

The CP-type G domain maps to 116-275 (RGQLKPVAAN…LIDSPGIREF (160 aa)). GTP contacts are provided by residues 163 to 166 (NKFD) and 217 to 225 (GQSGVGKSS). Residues Cys299, Cys304, His306, and Cys312 each contribute to the Zn(2+) site.

This sequence belongs to the TRAFAC class YlqF/YawG GTPase family. RsgA subfamily. As to quaternary structure, monomer. Associates with 30S ribosomal subunit, binds 16S rRNA. It depends on Zn(2+) as a cofactor.

It localises to the cytoplasm. Functionally, one of several proteins that assist in the late maturation steps of the functional core of the 30S ribosomal subunit. Helps release RbfA from mature subunits. May play a role in the assembly of ribosomal proteins into the subunit. Circularly permuted GTPase that catalyzes slow GTP hydrolysis, GTPase activity is stimulated by the 30S ribosomal subunit. In Pseudomonas fluorescens (strain Pf0-1), this protein is Small ribosomal subunit biogenesis GTPase RsgA.